A 102-amino-acid polypeptide reads, in one-letter code: Neuropeptide F (102 aa).

Residues 1–29 (MSNTMRCILIVCVALTLIAAGCNVEASNS) form the signal peptide. The propeptide occupies 30 to 32 (RPP). Residue Phe62 is modified to Phenylalanine amide. Positions 66–102 (GGPLMEMLRNRELENNMAKSINSGGELIRALDEEEVF) are excised as a propeptide.

This sequence belongs to the NPY family.

It is found in the secreted. An integral part of the sensory system that mediates food signaling, providing the neural basis for the regulation of food response; coordinates larval foraging and social behavior changes during development. May have a hormonal role in females. In Drosophila pseudoobscura pseudoobscura (Fruit fly), this protein is Neuropeptide F.